The primary structure comprises 295 residues: Shikimate dehydrogenase (NADP(+)) (295 aa).

Shikimate contacts are provided by residues 20 to 22 (SWS) and Thr-68. Lys-72 (proton acceptor) is an active-site residue. Residues Asn-93 and Asp-108 each contribute to the shikimate site. NADP(+) is bound by residues 132–136 (GNGGA) and Met-234. Shikimate is bound at residue Tyr-236. Position 257 (Gly-257) interacts with NADP(+).

This sequence belongs to the shikimate dehydrogenase family. In terms of assembly, homodimer.

It carries out the reaction shikimate + NADP(+) = 3-dehydroshikimate + NADPH + H(+). It participates in metabolic intermediate biosynthesis; chorismate biosynthesis; chorismate from D-erythrose 4-phosphate and phosphoenolpyruvate: step 4/7. Involved in the biosynthesis of the chorismate, which leads to the biosynthesis of aromatic amino acids. Catalyzes the reversible NADPH linked reduction of 3-dehydroshikimate (DHSA) to yield shikimate (SA). The chain is Shikimate dehydrogenase (NADP(+)) from Chlorobaculum tepidum (strain ATCC 49652 / DSM 12025 / NBRC 103806 / TLS) (Chlorobium tepidum).